Reading from the N-terminus, the 175-residue chain is UPF0398 protein SPD_0338 (175 aa).

It belongs to the UPF0398 family.

The chain is UPF0398 protein SPD_0338 from Streptococcus pneumoniae serotype 2 (strain D39 / NCTC 7466).